We begin with the raw amino-acid sequence, 419 residues long: UDP-N-acetylglucosamine 1-carboxyvinyltransferase (419 aa).

22–23 (KN) contacts phosphoenolpyruvate. Position 95 (Arg-95) interacts with UDP-N-acetyl-alpha-D-glucosamine. Cys-119 acts as the Proton donor in catalysis. A 2-(S-cysteinyl)pyruvic acid O-phosphothioketal modification is found at Cys-119. UDP-N-acetyl-alpha-D-glucosamine-binding positions include 164–167 (KVSV), Asp-308, and Ile-330.

It belongs to the EPSP synthase family. MurA subfamily.

The protein resides in the cytoplasm. It catalyses the reaction phosphoenolpyruvate + UDP-N-acetyl-alpha-D-glucosamine = UDP-N-acetyl-3-O-(1-carboxyvinyl)-alpha-D-glucosamine + phosphate. Its pathway is cell wall biogenesis; peptidoglycan biosynthesis. Cell wall formation. Adds enolpyruvyl to UDP-N-acetylglucosamine. In Rickettsia massiliae (strain Mtu5), this protein is UDP-N-acetylglucosamine 1-carboxyvinyltransferase.